A 96-amino-acid chain; its full sequence is Citrate lyase acyl carrier protein (96 aa).

S14 carries the O-(phosphoribosyl dephospho-coenzyme A)serine modification.

This sequence belongs to the CitD family. Oligomer with a subunit composition of (alpha,beta,gamma)6.

Its subcellular location is the cytoplasm. Its function is as follows. Covalent carrier of the coenzyme of citrate lyase. In Lactiplantibacillus plantarum (strain ATCC BAA-793 / NCIMB 8826 / WCFS1) (Lactobacillus plantarum), this protein is Citrate lyase acyl carrier protein.